A 231-amino-acid chain; its full sequence is 5'-methylthioadenosine/S-adenosylhomocysteine nucleosidase (231 aa).

Catalysis depends on glutamate 12, which acts as the Proton acceptor. Substrate-binding positions include glycine 78, valine 153, and 174 to 175; that span reads ME. Aspartate 198 acts as the Proton donor in catalysis.

It belongs to the PNP/UDP phosphorylase family. MtnN subfamily.

The catalysed reaction is S-adenosyl-L-homocysteine + H2O = S-(5-deoxy-D-ribos-5-yl)-L-homocysteine + adenine. The enzyme catalyses S-methyl-5'-thioadenosine + H2O = 5-(methylsulfanyl)-D-ribose + adenine. It carries out the reaction 5'-deoxyadenosine + H2O = 5-deoxy-D-ribose + adenine. The protein operates within amino-acid biosynthesis; L-methionine biosynthesis via salvage pathway; S-methyl-5-thio-alpha-D-ribose 1-phosphate from S-methyl-5'-thioadenosine (hydrolase route): step 1/2. Functionally, catalyzes the irreversible cleavage of the glycosidic bond in both 5'-methylthioadenosine (MTA) and S-adenosylhomocysteine (SAH/AdoHcy) to adenine and the corresponding thioribose, 5'-methylthioribose and S-ribosylhomocysteine, respectively. Also cleaves 5'-deoxyadenosine, a toxic by-product of radical S-adenosylmethionine (SAM) enzymes, into 5-deoxyribose and adenine. This is 5'-methylthioadenosine/S-adenosylhomocysteine nucleosidase from Vibrio parahaemolyticus serotype O3:K6 (strain RIMD 2210633).